The following is a 244-amino-acid chain: Type III pantothenate kinase (244 aa).

An ATP-binding site is contributed by 7 to 14; the sequence is DIGNTRLK. Substrate-binding positions include Y95 and 102 to 105; that span reads GIDR. Residue D104 is the Proton acceptor of the active site. T126 contributes to the ATP binding site. Residue T177 participates in substrate binding.

Belongs to the type III pantothenate kinase family. As to quaternary structure, homodimer. NH4(+) serves as cofactor. It depends on K(+) as a cofactor.

The protein resides in the cytoplasm. It carries out the reaction (R)-pantothenate + ATP = (R)-4'-phosphopantothenate + ADP + H(+). The protein operates within cofactor biosynthesis; coenzyme A biosynthesis; CoA from (R)-pantothenate: step 1/5. In terms of biological role, catalyzes the phosphorylation of pantothenate (Pan), the first step in CoA biosynthesis. The sequence is that of Type III pantothenate kinase from Acinetobacter baumannii (strain AB307-0294).